The sequence spans 95 residues: Neutrophil antibiotic peptide NP-4 (95 aa).

An N-terminal signal peptide occupies residues 1-19 (MRTLALLAAILLVTLQAQA). Positions 20–62 (ELHSGMADDGVDQQQPRAQDLDVAVYIKQDETSPLEVLGAKAG) are excised as a propeptide. 3 disulfide bridges follow: cysteine 65–cysteine 93, cysteine 67–cysteine 82, and cysteine 72–cysteine 92.

The protein belongs to the alpha-defensin family.

It localises to the secreted. Its function is as follows. Microbicidal activity. This chain is Neutrophil antibiotic peptide NP-4, found in Oryctolagus cuniculus (Rabbit).